Consider the following 957-residue polypeptide: MTQTLSQLENRDAFIERHIGPDAQQQQEMLKTVGADSLNALIGQIVPQDIQLATPPQVGDATTEFAALAELKAIASRNKRFKSYIGMGYTAVQLPPVIQRNMLENPGWYTAYTPYQPEVSQGRLESLLNFQQVTLDLTGLDIASASLLDEATAAAEAMAMAKRVSKLKSANRFFVAADVHPQTLDVVRTRAETFGFDVIVDDADKVLDHQDVFGVLLQQVGTTGEIHDYSKLIAELKARKVIVSVAADFMALVLLTAPGKQGADIVFGSAQRFGVPMGYGGPHAAFFAAKDEFKRSMPGRIIGVSKDAAGNTALRMAMQTREQHIRREKANSNICTSQVLLANIASLYAVFHGPAGLKRIAGRIHRLTDILADGLQKKGLKLRHAHYFDTLCVEVADKAAVLARAEALQINLRSDIHGAVGITLDEATTREDVLNLFRAIVGDDHGLDIDTLDKDVALDSRSIPAAMLRDDAILTHPVFNRYHSETEMMRYMHALERKDLALNQAMIPLGSCTMKLNAAAEMIPITWPEFAELHPFCPVEQAEGYQQMIAQLSDWLVKLTGYDAVCMQPNSGAQGEYAGLLAIRHYHESRNEGHRDICLIPSSAHGTNPASAQMAGMQVVVVACDKNGNIDLADLREKAEQAGANLSCIMVTYPSTHGVYEETIREVCEIVHQFGGQVYLDGANMNAQVGITSPGFIGADVSHLNLHKTFCIPHGGGGPGMGSIGVKAHLAPFVPGHSVVQIEGMLTRQGAVSAAPFGSASILPISWMYIRMMGAEGLKQASQNAILNANYIATRLKDAYPVLYTGRDGRVAHECILDIRPLKEETGISELDIAKRLIDFGFHAPTMSFPVAGTLMVEPTESESKVELDRFIDAMLAIRAEIDRVKAGEWPLEDNPLVNAPHTQGELVGEWNHPYSRELAVFPAGLHNKYWPTVKRLDDVYGDRNLFCSCVPMSEYQ.

Residue lysine 708 is modified to N6-(pyridoxal phosphate)lysine.

The protein belongs to the GcvP family. The glycine cleavage system is composed of four proteins: P, T, L and H. The cofactor is pyridoxal 5'-phosphate.

It catalyses the reaction N(6)-[(R)-lipoyl]-L-lysyl-[glycine-cleavage complex H protein] + glycine + H(+) = N(6)-[(R)-S(8)-aminomethyldihydrolipoyl]-L-lysyl-[glycine-cleavage complex H protein] + CO2. Functionally, the glycine cleavage system catalyzes the degradation of glycine. The P protein binds the alpha-amino group of glycine through its pyridoxal phosphate cofactor; CO(2) is released and the remaining methylamine moiety is then transferred to the lipoamide cofactor of the H protein. This Klebsiella pneumoniae subsp. pneumoniae (strain ATCC 700721 / MGH 78578) protein is Glycine dehydrogenase (decarboxylating).